The primary structure comprises 475 residues: Kynureninase (475 aa).

Pyridoxal 5'-phosphate contacts are provided by residues leucine 142, threonine 143, 170-173 (FPSD), aspartate 255, histidine 258, and tyrosine 280. Lysine 281 carries the post-translational modification N6-(pyridoxal phosphate)lysine. Residues tryptophan 320 and asparagine 348 each contribute to the pyridoxal 5'-phosphate site.

This sequence belongs to the kynureninase family. As to quaternary structure, homodimer. The cofactor is pyridoxal 5'-phosphate.

It is found in the cytoplasm. The catalysed reaction is L-kynurenine + H2O = anthranilate + L-alanine + H(+). It carries out the reaction 3-hydroxy-L-kynurenine + H2O = 3-hydroxyanthranilate + L-alanine + H(+). The protein operates within amino-acid degradation; L-kynurenine degradation; L-alanine and anthranilate from L-kynurenine: step 1/1. It functions in the pathway cofactor biosynthesis; NAD(+) biosynthesis; quinolinate from L-kynurenine: step 2/3. In terms of biological role, catalyzes the cleavage of L-kynurenine (L-Kyn) and L-3-hydroxykynurenine (L-3OHKyn) into anthranilic acid (AA) and 3-hydroxyanthranilic acid (3-OHAA), respectively. This is Kynureninase (bna5) from Botryotinia fuckeliana (strain B05.10) (Noble rot fungus).